Consider the following 34-residue polypeptide: ECKYLWGTCSKDEDCCAHLGCNRKHDWCGWDYTF.

Disulfide bonds link Cys-2–Cys-16, Cys-9–Cys-21, and Cys-15–Cys-28.

The protein belongs to the neurotoxin 10 (Hwtx-1) family. 54 (ProTx-1) subfamily. In terms of tissue distribution, expressed by the venom gland.

The protein localises to the secreted. Functionally, ion channel impairing toxin that inhibits voltage-gated sodium channels. The recombinantly expressed toxin shows a weak activity against Nav1.7/SCN9A (25% inhibition at 10 uM), and shifts the voltage dependence of channel activation to more depolarized potentials. This is Beta/mu-theraphotoxin-Pe1a from Phormingochilus everetti (Malaysian purple earth tiger tarantula).